The following is a 631-amino-acid chain: RNA polymerase sigma factor RpoD (631 aa).

The tract at residues 395–465 (LIKANLRLVV…TRSISDQART (71 aa)) is sigma-70 factor domain-2. Residues 419–422 (DLVQ) carry the Interaction with polymerase core subunit RpoC motif. Positions 474–550 (EQINRLNRET…DKAIKNPANH (77 aa)) are sigma-70 factor domain-3. Positions 563–616 (ILGTLPEREQEVVKMRFGLEDGYSLTLEEVGLHFNVTRERIRQIESKALRRLKN) are sigma-70 factor domain-4. The H-T-H motif DNA-binding region spans 589–608 (LEEVGLHFNVTRERIRQIES).

The protein belongs to the sigma-70 factor family. RpoD/SigA subfamily. As to quaternary structure, interacts transiently with the RNA polymerase catalytic core.

It is found in the cytoplasm. Functionally, sigma factors are initiation factors that promote the attachment of RNA polymerase to specific initiation sites and are then released. This sigma factor is the primary sigma factor during exponential growth. This is RNA polymerase sigma factor RpoD from Borreliella burgdorferi (strain ATCC 35210 / DSM 4680 / CIP 102532 / B31) (Borrelia burgdorferi).